Reading from the N-terminus, the 104-residue chain is Pole-localizer protein TmaR (104 aa).

2 coiled-coil regions span residues 7 to 34 (IVNQARRKNKLKRELLDNEKKVRDNRKR) and 76 to 96 (SAEISKARRDISRRIRELTEE).

Belongs to the pole-localizer TmaR family.

Its subcellular location is the cytoplasm. Functionally, pole-localizer protein involved in the regulation of several cellular processes. This Vibrio campbellii (strain ATCC BAA-1116) protein is Pole-localizer protein TmaR.